We begin with the raw amino-acid sequence, 332 residues long: Biotin synthase (332 aa).

Positions 52–282 constitute a Radical SAM core domain; sequence FPENEVEFCS…KAELRLCGGR (231 aa). The [4Fe-4S] cluster site is built by Cys-70, Cys-74, and Cys-77. [2Fe-2S] cluster is bound by residues Cys-114, Cys-147, Cys-207, and Arg-277.

It belongs to the radical SAM superfamily. Biotin synthase family. In terms of assembly, homodimer. The cofactor is [4Fe-4S] cluster. [2Fe-2S] cluster serves as cofactor.

It carries out the reaction (4R,5S)-dethiobiotin + (sulfur carrier)-SH + 2 reduced [2Fe-2S]-[ferredoxin] + 2 S-adenosyl-L-methionine = (sulfur carrier)-H + biotin + 2 5'-deoxyadenosine + 2 L-methionine + 2 oxidized [2Fe-2S]-[ferredoxin]. It functions in the pathway cofactor biosynthesis; biotin biosynthesis; biotin from 7,8-diaminononanoate: step 2/2. Its function is as follows. Catalyzes the conversion of dethiobiotin (DTB) to biotin by the insertion of a sulfur atom into dethiobiotin via a radical-based mechanism. The protein is Biotin synthase of Aquifex aeolicus (strain VF5).